A 302-amino-acid chain; its full sequence is D-alanine--D-alanine ligase (302 aa).

In terms of domain architecture, ATP-grasp spans 104 to 296 (KLVFERFAIP…FPDLVTWLVE (193 aa)). 130–183 (AMARPYVVKPLDQGSSVGVTIVTSETNDLPFSRDDWPYGRQVMVERFIPGRELT) lines the ATP pocket. Residues Asp251, Glu263, and Asn265 each coordinate Mg(2+).

Belongs to the D-alanine--D-alanine ligase family. Mg(2+) serves as cofactor. It depends on Mn(2+) as a cofactor.

Its subcellular location is the cytoplasm. It catalyses the reaction 2 D-alanine + ATP = D-alanyl-D-alanine + ADP + phosphate + H(+). The protein operates within cell wall biogenesis; peptidoglycan biosynthesis. In terms of biological role, cell wall formation. The protein is D-alanine--D-alanine ligase of Rhodospirillum rubrum (strain ATCC 11170 / ATH 1.1.1 / DSM 467 / LMG 4362 / NCIMB 8255 / S1).